Reading from the N-terminus, the 527-residue chain is Cytochrome P450 714B3 (527 aa).

Topologically, residues 1–14 are lumenal; sequence MEVAMAMAVKVLLS. The chain crosses the membrane as a helical; Signal-anchor for type III membrane protein span at residues 15-35; the sequence is LCCVGACGLAVYLYHILWLVP. Residues 36 to 527 are Cytoplasmic-facing; it reads QKVLAKFEDQ…SVCTKRGTAI (492 aa). Cys-464 is a binding site for heme.

It belongs to the cytochrome P450 family. It depends on heme as a cofactor.

It is found in the membrane. In terms of biological role, may be involved in gibberellin metabolism. The protein is Cytochrome P450 714B3 (CYP714B3) of Zea mays (Maize).